A 246-amino-acid chain; its full sequence is Ubiquinone/menaquinone biosynthesis C-methyltransferase UbiE (246 aa).

Residues threonine 75, aspartate 95, and 119–120 (DA) contribute to the S-adenosyl-L-methionine site.

This sequence belongs to the class I-like SAM-binding methyltransferase superfamily. MenG/UbiE family.

It carries out the reaction a 2-demethylmenaquinol + S-adenosyl-L-methionine = a menaquinol + S-adenosyl-L-homocysteine + H(+). The catalysed reaction is a 2-methoxy-6-(all-trans-polyprenyl)benzene-1,4-diol + S-adenosyl-L-methionine = a 5-methoxy-2-methyl-3-(all-trans-polyprenyl)benzene-1,4-diol + S-adenosyl-L-homocysteine + H(+). It participates in quinol/quinone metabolism; menaquinone biosynthesis; menaquinol from 1,4-dihydroxy-2-naphthoate: step 2/2. Its pathway is cofactor biosynthesis; ubiquinone biosynthesis. In terms of biological role, methyltransferase required for the conversion of demethylmenaquinol (DMKH2) to menaquinol (MKH2) and the conversion of 2-polyprenyl-6-methoxy-1,4-benzoquinol (DDMQH2) to 2-polyprenyl-3-methyl-6-methoxy-1,4-benzoquinol (DMQH2). The sequence is that of Ubiquinone/menaquinone biosynthesis C-methyltransferase UbiE from Desulfotalea psychrophila (strain LSv54 / DSM 12343).